The chain runs to 562 residues: Formate--tetrahydrofolate ligase (562 aa).

71–78 (TPAGEGKS) contacts ATP.

Belongs to the formate--tetrahydrofolate ligase family.

It carries out the reaction (6S)-5,6,7,8-tetrahydrofolate + formate + ATP = (6R)-10-formyltetrahydrofolate + ADP + phosphate. It participates in one-carbon metabolism; tetrahydrofolate interconversion. The protein is Formate--tetrahydrofolate ligase of Bacillus cereus (strain ATCC 14579 / DSM 31 / CCUG 7414 / JCM 2152 / NBRC 15305 / NCIMB 9373 / NCTC 2599 / NRRL B-3711).